The primary structure comprises 903 residues: MGISWFLSRFRIRTVAPSSFLKPRGLVYRPSQIRRRVSLLSLSGFHPYRAYSILGPKTPTAFNSANTVRFFSFSSISRLVFRSLRLPVAGFSLVAGGAAYIGAQVQRASDYTKDIFDKTFGILDSTWEKTRETVASVTNVQLPEISMPLWLEKILRLDEESAERRRVLQAERAKEHRSNSNDKQKSSDNDEDPNDTTVGIGAALAASILSVDSVDGEDTLTADEKRKLAQESKEDRMMLFTKKMIEIRNILQDIQDNNSAVTLPSIVVIGSQSSGKSSVLEAIVGHEFLPKGSNMVTRRPIELTLVHSADTAIPYGEFSGVQLGKITDFSKIQHILTDLNMAVPSSQGVDDNPIRLTIYASHIPNLSLIDLPGYIQIHSEDQPADLDMKISKLCEKYIREPNIILAVCAADVDLANSAALRASRRVDPLGLRTIGVVTKMDLVPPSKAISILHNNNYPLHYGYIGVISRIVPTGRFSAGQNLTDLVSTQENSYFSTHQQFADARIGNYLGIQSLRKCLINVLEYTMSKNLQHTADSIRTELEECNYQYKVQYNDRVLTADSYIAEGLDIFKAAFKEFTQKFGKSEVRDLLKSSLNEKVMDLLAERYWTDDDISNWSKHTNALDEHWKYKLDSCVSTLTRMGLGRVSTLLVTDSISKCIDEITKASPFADHPAAMQYIMNAAQDILRRRFHATSEQVENCVKPYKYDVEVNDDEWKSSRGQAEKLLQRELGLCQSALEKIKNAVGSRRMNQVLQYLEEQKTSSEPLPASYSTALLEQGRMLQYLKMREDILKLRISVLKSRACKHKEAKYTCPEIFLNAVSDKLVNTAVLFINIELLSEFYYQFPRELDQRLIHSLSSEQLNAFVNENPRLKSQLQLQHKRQCLELALQKINSLVILEQQADSD.

Residues 1-78 (MGISWFLSRF…RFFSFSSISR (78 aa)) constitute a mitochondrion transit peptide. Residues 86–103 (LPVAGFSLVAGGAAYIGA) traverse the membrane as a helical segment. Basic and acidic residues predominate over residues 167-188 (VLQAERAKEHRSNSNDKQKSSD). Positions 167–198 (VLQAERAKEHRSNSNDKQKSSDNDEDPNDTTV) are disordered. The helical transmembrane segment at 198-214 (VGIGAALAASILSVDSV) threads the bilayer. In terms of domain architecture, Dynamin-type G spans 260-531 (AVTLPSIVVI…LEYTMSKNLQ (272 aa)). Residues 270 to 277 (GSQSSGKS) are G1 motif. Positions 273, 274, 275, 276, 277, 278, and 292 each coordinate GTP. Ser277 contributes to the Mg(2+) binding site. A G2 motif region spans residues 296 to 298 (VTR). Mg(2+)-binding residues include Thr297 and Asp370. The segment at 370–373 (DLPG) is G3 motif. Residues 438–441 (TKMD) are G4 motif. Lys439, Asp441, and Ser468 together coordinate GTP. A G5 motif region spans residues 467–470 (ISRI). Residues 691 to 805 (ATSEQVENCV…VLKSRACKHK (115 aa)) are paddle region. Cys802 and Cys811 are oxidised to a cystine. Residues 805–898 (KEAKYTCPEI…KINSLVILEQ (94 aa)) form the GED domain.

This sequence belongs to the TRAFAC class dynamin-like GTPase superfamily. Dynamin/Fzo/YdjA family. In terms of assembly, homooligomer. Interacts with cdr1. Cleavage of the transit peptide by mitochondrial processing protease (MPP) produces a long integral membrane form of msp1 (l-msp1). Further processing by a rhomboid protease after the transmembrane regions produces a short peripheral membrane form of msp1 (s-msp1). Both isoforms are required for full activity.

It is found in the mitochondrion inner membrane. It localises to the mitochondrion intermembrane space. The enzyme catalyses GTP + H2O = GDP + phosphate + H(+). Dynamin-related GTPase that is essential for normal mitochondrial morphology by mediating fusion of the mitochondrial inner membranes and maintaining respiratory chain function. Exists in two forms: the transmembrane, long form (Dynamin-like GTPase msp1, long form; l-msp1), which is tethered to the inner mitochondrial membrane, and the short soluble form (Dynamin-like GTPase msp1, short form; s-msp1), which results from proteolytic cleavage and localizes in the intermembrane space. Both forms (l-msp1 and s-msp1) cooperate to catalyze the fusion of the mitochondrial inner membrane. Its role in mitochondrial morphology is required for mitochondrial genome maintenance. In terms of biological role, constitutes the transmembrane long form (l-msp1) that plays a central role in mitochondrial inner membrane fusion. L-msp1 and the soluble short form (s-msp1) form higher-order helical assemblies that coordinate the fusion of mitochondrial inner membranes. Inner membrane-anchored l-msp1 molecules initiate membrane remodeling by recruiting soluble s-msp1 to rapidly polymerize into a flexible cylindrical scaffold encaging the mitochondrial inner membrane. Once at the membrane surface, the formation of s-msp1 helices induce bilayer curvature. Msp1 dimerization through the paddle region, which inserts into cardiolipin-containing membrane, promotes GTP hydrolysis and the helical assembly of a flexible msp1 lattice on the membrane, which drives membrane curvature and mitochondrial fusion. Its function is as follows. Constitutes the soluble short form (s-msp1) generated by cleavage, which plays a central role in mitochondrial inner membrane fusion. The transmembrane long form (l-msp1) and the s-msp1 form higher-order helical assemblies that coordinate the fusion of mitochondrial inner membranes. Inner membrane-anchored l-msp1 molecules initiate membrane remodeling by recruiting soluble s-msp1 to rapidly polymerize into a flexible cylindrical scaffold encaging the mitochondrial inner membrane. Once at the membrane surface, the formation of s-msp1 helices induce bilayer curvature. Msp1 dimerization through the paddle region, which inserts into cardiolipin-containing membrane, promotes GTP hydrolysis and the helical assembly of a flexible msp1 lattice on the membrane, which drives membrane curvature and mitochondrial fusion. The protein is Dynamin-like GTPase msp1, mitochondrial of Schizosaccharomyces pombe (strain 972 / ATCC 24843) (Fission yeast).